We begin with the raw amino-acid sequence, 427 residues long: Inward rectifier potassium channel 2 (427 aa).

The Cytoplasmic segment spans residues 1-81 (MGSVRTNRYS…IFTTCVDIRW (81 aa)). The chain crosses the membrane as a helical span at residues 82 to 106 (RWMLVIFCLTFILSWLFFGCVFWLI). Topologically, residues 107–128 (ALLHGDLENQENNKPCVSQVSS) are extracellular. The segment at residues 129–140 (FTAAFLFSIETQ) is an intramembrane region (helical; Pore-forming). An intramembrane region (pore-forming) is located at residues 141–147 (TTIGYGF). Positions 142–147 (TIGYGF) match the Selectivity filter motif. Topologically, residues 148 to 156 (RCVTDECPI) are extracellular. Residues 157-178 (AVFMVVFQSIVGCIIDAFIIGA) traverse the membrane as a helical segment. The Cytoplasmic segment spans residues 179-427 (VMAKMAKPKK…PRPLRRESEI (249 aa)). The tract at residues 181–208 (AKMAKPKKRNETLVFSHNAVVAMRDGKL) is polyphosphoinositide (PIP2)-binding. Residues 386–427 (EEDEIDTGVPESTSTDTHPDMDHHNQAGVPLEPRPLRRESEI) form a disordered region. Positions 425–427 (SEI) match the PDZ-binding motif.

This sequence belongs to the inward rectifier-type potassium channel (TC 1.A.2.1) family. KCNJ2 subfamily. Homotetramer. Homomultimeric and heteromultimeric association with KCNJ4/Kir2.3, resulting in an enhanced G-protein-induced current. Associates, via its PDZ-recognition domain, with a complex containing LIN7A, LIN7B, LIN7C, DLG1, CASK and APBA1. As to expression, found in the apical basilar papilla of the inner ear, brain, muscle, cerebellum, heart and liver.

Its subcellular location is the cell membrane. The protein resides in the sarcolemma. The protein localises to the T-tubule. The catalysed reaction is K(+)(in) = K(+)(out). With respect to regulation, activated by phosphatidylinositol 4,5 biphosphate (PtdIns(4,5)P2). Its function is as follows. Inward rectifier potassium channels are characterized by a greater tendency to allow potassium to flow into the cell rather than out of it. Their voltage dependence is regulated by the concentration of extracellular potassium; as external potassium is raised, the voltage range of the channel opening shifts to more positive voltages. The inward rectification is mainly due to the blockage of outward current by internal magnesium. Can be blocked by external barium. Probably participates in establishing action potential waveform and excitability of neuronal and muscle tissues. The polypeptide is Inward rectifier potassium channel 2 (KCNJ2) (Gallus gallus (Chicken)).